The following is a 278-amino-acid chain: Putative non-heme haloperoxidase (278 aa).

The AB hydrolase-1 domain occupies 24-240 (PLVFLHGLSV…STAKITNASF (217 aa)). Catalysis depends on residues serine 97 and aspartate 221.

It belongs to the AB hydrolase superfamily.

The protein is Putative non-heme haloperoxidase (59.2) of Mycobacterium (Mycobacteriophage D29).